The sequence spans 130 residues: kinetoplast-associated protein 2-1 (130 aa).

Positions 1 to 10 (MLRRTVSNFA) are excised as a propeptide. Positions 89-130 (LTKKWNETKQAQREKAQKAQKKTKSAKSKVKKAAKKSKKSKK) are disordered. A compositionally biased stretch (basic and acidic residues) spans 92–105 (KWNETKQAQREKAQ). Over residues 106–130 (KAQKKTKSAKSKVKKAAKKSKKSKK) the composition is skewed to basic residues.

Belongs to the KAP family. Associates with the kinetoplast DNA network.

The protein localises to the mitochondrion matrix. It is found in the kinetoplast. Histone H1-like DNA-binding protein involved in the organization and segregation of kinetoplast DNA (kDNA). The mitochondrial DNA of kinetoplastid protozoa consists of about 5,000 minicircles and 20 to 30 maxicircles. These circular DNAs are held together by catenation into a highly organized compact disk structure referred to as a kinetoplast DNA (kDNA) network. Binds preferentially to a specific fragment of minicircle DNA and is able to compact kDNA networks through DNA charge neutralization and condensation. The chain is kinetoplast-associated protein 2-1 (KAP2-1) from Crithidia fasciculata.